Reading from the N-terminus, the 771-residue chain is Protein translocase subunit SecA 2 (771 aa).

Residues Gln91, 109–113, and Asp496 contribute to the ATP site; that span reads GEGKT.

The protein belongs to the SecA family. In terms of assembly, monomer and homodimer. Part of the essential Sec protein translocation apparatus which comprises SecA, SecYEG and auxiliary proteins SecDF. Other proteins may also be involved.

The protein localises to the cell membrane. The protein resides in the cytoplasm. It catalyses the reaction ATP + H2O + cellular proteinSide 1 = ADP + phosphate + cellular proteinSide 2.. In terms of biological role, part of the Sec protein translocase complex. Interacts with the SecYEG preprotein conducting channel. Has a central role in coupling the hydrolysis of ATP to the transfer of proteins into and across the cell membrane, serving as an ATP-driven molecular motor driving the stepwise translocation of polypeptide chains across the membrane. This chain is Protein translocase subunit SecA 2, found in Corynebacterium jeikeium (strain K411).